A 322-amino-acid polypeptide reads, in one-letter code: Chemokine XC receptor 1 (322 aa).

Residues 1–27 (MESSTAFYDYHDKLSLLCENNVIFFST) are Extracellular-facing. The chain crosses the membrane as a helical span at residues 28–55 (ISTIVLYSLVFLLSLVGNSLVLWVLVKY). Residues 56–65 (ENLESLTNIF) are Cytoplasmic-facing. A helical membrane pass occupies residues 66–85 (ILNLCLSDLMFSCLLPVLIS). At 86–98 (AQWSWFLGDFFCK) the chain is on the extracellular side. Cysteine 97 and cysteine 170 are joined by a disulfide. Residues 99–120 (FFNMIFGISLYSSIFFLTIMTI) traverse the membrane as a helical segment. Residues 121 to 137 (HRYLSVVSPISTLGIHT) are Cytoplasmic-facing. A helical transmembrane segment spans residues 138 to 162 (LRCRVLVTSCVWAASILFSIPDAVF). The Extracellular portion of the chain corresponds to 163–185 (HKVISLNCKYSEHHGFLASVYQH). Residues 186–204 (NIFFLLSMGIILFCYVQIL) form a helical membrane-spanning segment. The Cytoplasmic portion of the chain corresponds to 205–220 (RTLFRTRSRQRHRTVR). A helical transmembrane segment spans residues 221 to 243 (LIFTVVVAYFLSWAPYNLTLFLK). Over 244–259 (TGIIQQSCESLQQLDI) the chain is Extracellular. Residues 260-283 (AMIICRHLAFSHCCFNPVLYVFVG) form a helical membrane-spanning segment. The Cytoplasmic portion of the chain corresponds to 284–322 (IKFRRHLKHLFQQVWLCRKTSSTVPCSPGTFTYEGPSFY).

It belongs to the G-protein coupled receptor 1 family. In terms of tissue distribution, expressed by dendritic cells from the thymus, slpeen, subcutaneous lymph nodes and mesenteric lymph nodes.

Its subcellular location is the cell membrane. Receptor for chemokines SCYC1 and SCYC2. Subsequently transduces a signal by increasing the intracellular calcium ions level. Receptor for XCL1/Lymphotactin. This chain is Chemokine XC receptor 1 (Xcr1), found in Mus musculus (Mouse).